We begin with the raw amino-acid sequence, 320 residues long: Malate dehydrogenase (320 aa).

NAD(+) is bound by residues 8-13 and Asp33; that span reads GAGQIG. Arg82 and Arg88 together coordinate substrate. NAD(+) contacts are provided by residues Asn95 and 118-120; that span reads ITN. Residues Asn120 and Arg151 each contribute to the substrate site. The active-site Proton acceptor is His175.

This sequence belongs to the LDH/MDH superfamily. MDH type 3 family.

It carries out the reaction (S)-malate + NAD(+) = oxaloacetate + NADH + H(+). Functionally, catalyzes the reversible oxidation of malate to oxaloacetate. In Pelagibacter ubique (strain HTCC1062), this protein is Malate dehydrogenase.